Consider the following 147-residue polypeptide: Deoxyuridine 5'-triphosphate nucleotidohydrolase (147 aa).

Residues 68 to 70 (RSG), Asn81, and 85 to 87 (TID) each bind substrate.

It belongs to the dUTPase family. Requires Mg(2+) as cofactor.

The enzyme catalyses dUTP + H2O = dUMP + diphosphate + H(+). It functions in the pathway pyrimidine metabolism; dUMP biosynthesis; dUMP from dCTP (dUTP route): step 2/2. Its function is as follows. This enzyme is involved in nucleotide metabolism: it produces dUMP, the immediate precursor of thymidine nucleotides and it decreases the intracellular concentration of dUTP so that uracil cannot be incorporated into DNA. This chain is Deoxyuridine 5'-triphosphate nucleotidohydrolase, found in Solibacter usitatus (strain Ellin6076).